The chain runs to 538 residues: Coiled-coil domain-containing protein 8 (538 aa).

The segment at Ile58 to Arg128 is disordered. The segment covering Gln119–Arg128 has biased composition (basic residues). Residues Ser142, Ser146, and Ser261 each carry the phosphoserine modification. A disordered region spans residues Trp213–Lys473. Basic and acidic residues predominate over residues Asp301–Glu313. The segment covering Ala321–Ala332 has biased composition (low complexity). The stretch at Ala349–Asn366 forms a coiled coil. Basic and acidic residues-rich tracts occupy residues Asp357–Ala373, Asp381–Arg392, and Asp405–Ala419. Composition is skewed to low complexity over residues Gln428–Ala438 and Ala458–Ala469. A PxLPxI/L motif; mediates interaction with ANKRA2 motif is present at residues Pro500–Pro506. Residues Glu514 to Glu535 adopt a coiled-coil conformation.

Component of the 3M complex, composed of core components CUL7, CCDC8 and OBSL1. Interacts (via PxLPxI/L motif) with ANKRA2 (via ankyrin repeats); may link the 3M complex to histone deacetylases including HDAC4 and HDAC5. Widely expressed with low levels in spleen, skeletal muscle, small intestine, kidney and liver.

It is found in the cytoplasm. It localises to the cytoskeleton. The protein resides in the microtubule organizing center. The protein localises to the centrosome. Core component of the 3M complex, a complex required to regulate microtubule dynamics and genome integrity. It is unclear how the 3M complex regulates microtubules, it could act by controlling the level of a microtubule stabilizer. Required for localization of CUL7 to the centrosome. This Homo sapiens (Human) protein is Coiled-coil domain-containing protein 8 (CCDC8).